The chain runs to 150 residues: Cytochrome c oxidase subunit 5A, mitochondrial (150 aa).

Residues 1-41 constitute a mitochondrion transit peptide; the sequence is MLGAALRRCAVAATAWAGPRGLLHSAPTPGPAAAIHSVRCY. Positions 2–17 match the SIFI-degron motif; sequence LGAALRRCAVAATAWA. N6-acetyllysine occurs at positions 87 and 113. The residue at position 141 (T141) is a Phosphothreonine.

The protein belongs to the cytochrome c oxidase subunit 5A family. Component of the cytochrome c oxidase (complex IV, CIV), a multisubunit enzyme composed of 14 subunits. The complex is composed of a catalytic core of 3 subunits MT-CO1, MT-CO2 and MT-CO3, encoded in the mitochondrial DNA, and 11 supernumerary subunits COX4I, COX5A, COX5B, COX6A, COX6B, COX6C, COX7A, COX7B, COX7C, COX8 and NDUFA4, which are encoded in the nuclear genome. The complex exists as a monomer or a dimer and forms supercomplexes (SCs) in the inner mitochondrial membrane with NADH-ubiquinone oxidoreductase (complex I, CI) and ubiquinol-cytochrome c oxidoreductase (cytochrome b-c1 complex, complex III, CIII), resulting in different assemblies (supercomplex SCI(1)III(2)IV(1) and megacomplex MCI(2)III(2)IV(2)). Interacts with AFG1L. Interacts with RAB5IF. Post-translationally, in response to mitochondrial stress, the precursor protein is ubiquitinated by the SIFI complex in the cytoplasm before mitochondrial import, leading to its degradation. Within the SIFI complex, UBR4 initiates ubiquitin chain that are further elongated or branched by KCMF1.

The protein resides in the mitochondrion inner membrane. Its pathway is energy metabolism; oxidative phosphorylation. Functionally, component of the cytochrome c oxidase, the last enzyme in the mitochondrial electron transport chain which drives oxidative phosphorylation. The respiratory chain contains 3 multisubunit complexes succinate dehydrogenase (complex II, CII), ubiquinol-cytochrome c oxidoreductase (cytochrome b-c1 complex, complex III, CIII) and cytochrome c oxidase (complex IV, CIV), that cooperate to transfer electrons derived from NADH and succinate to molecular oxygen, creating an electrochemical gradient over the inner membrane that drives transmembrane transport and the ATP synthase. Cytochrome c oxidase is the component of the respiratory chain that catalyzes the reduction of oxygen to water. Electrons originating from reduced cytochrome c in the intermembrane space (IMS) are transferred via the dinuclear copper A center (CU(A)) of subunit 2 and heme A of subunit 1 to the active site in subunit 1, a binuclear center (BNC) formed by heme A3 and copper B (CU(B)). The BNC reduces molecular oxygen to 2 water molecules using 4 electrons from cytochrome c in the IMS and 4 protons from the mitochondrial matrix. This chain is Cytochrome c oxidase subunit 5A, mitochondrial (COX5A), found in Saimiri sciureus (Common squirrel monkey).